We begin with the raw amino-acid sequence, 599 residues long: DNA primase (599 aa).

The CHC2-type zinc-finger motif lies at Cys-40–Cys-64. A Toprim domain is found at Asn-259 to Asp-342. Mg(2+)-binding residues include Glu-265, Asp-309, and Asp-311.

It belongs to the DnaG primase family. In terms of assembly, monomer. Interacts with DnaB. It depends on Zn(2+) as a cofactor. Mg(2+) is required as a cofactor.

The enzyme catalyses ssDNA + n NTP = ssDNA/pppN(pN)n-1 hybrid + (n-1) diphosphate.. Its function is as follows. RNA polymerase that catalyzes the synthesis of short RNA molecules used as primers for DNA polymerase during DNA replication. In Halalkalibacterium halodurans (strain ATCC BAA-125 / DSM 18197 / FERM 7344 / JCM 9153 / C-125) (Bacillus halodurans), this protein is DNA primase.